Here is a 618-residue protein sequence, read N- to C-terminus: Dihydroxy-acid dehydratase (618 aa).

Aspartate 81 lines the Mg(2+) pocket. Position 122 (cysteine 122) interacts with [2Fe-2S] cluster. Positions 123 and 124 each coordinate Mg(2+). Lysine 124 carries the post-translational modification N6-carboxylysine. Cysteine 195 contributes to the [2Fe-2S] cluster binding site. Mg(2+) is bound at residue glutamate 491. Serine 517 serves as the catalytic Proton acceptor.

It belongs to the IlvD/Edd family. Homodimer. Requires [2Fe-2S] cluster as cofactor. Mg(2+) serves as cofactor.

It carries out the reaction (2R)-2,3-dihydroxy-3-methylbutanoate = 3-methyl-2-oxobutanoate + H2O. The enzyme catalyses (2R,3R)-2,3-dihydroxy-3-methylpentanoate = (S)-3-methyl-2-oxopentanoate + H2O. The protein operates within amino-acid biosynthesis; L-isoleucine biosynthesis; L-isoleucine from 2-oxobutanoate: step 3/4. It participates in amino-acid biosynthesis; L-valine biosynthesis; L-valine from pyruvate: step 3/4. In terms of biological role, functions in the biosynthesis of branched-chain amino acids. Catalyzes the dehydration of (2R,3R)-2,3-dihydroxy-3-methylpentanoate (2,3-dihydroxy-3-methylvalerate) into 2-oxo-3-methylpentanoate (2-oxo-3-methylvalerate) and of (2R)-2,3-dihydroxy-3-methylbutanoate (2,3-dihydroxyisovalerate) into 2-oxo-3-methylbutanoate (2-oxoisovalerate), the penultimate precursor to L-isoleucine and L-valine, respectively. The chain is Dihydroxy-acid dehydratase from Rhodopseudomonas palustris (strain TIE-1).